We begin with the raw amino-acid sequence, 192 residues long: MPHFCLVASTSMLSASYDVSQDLSSALYTSSSTYKYESASARIDCLSTTCTQVLKTLEIEHKLSMKVFATLFLLAASATAALAAVPAPNAGCSQPGQYCNGGTFLCCNNRQCNNNVRVPYSVPGYARNPSYAFSRHHGRNGSSQLSMSIWDALEELLVSGGDWVSYNQWAKYEAGARVVGTIHERRGMNEID.

3 disulfides stabilise this stretch: Cys45-Cys106, Cys50-Cys99, and Cys107-Cys112.

This sequence belongs to the fungal hydrophobin family. In terms of assembly, self-assembles to form functional amyloid fibrils called rodlets. Self-assembly into fibrillar rodlets occurs spontaneously at hydrophobic:hydrophilic interfaces and the rodlets further associate laterally to form amphipathic monolayers.

Its function is as follows. Aerial growth, conidiation, and dispersal of filamentous fungi in the environment rely upon a capability of their secreting small amphipathic proteins called hydrophobins (HPBs) with low sequence identity. Class I can self-assemble into an outermost layer of rodlet bundles on aerial cell surfaces, conferring cellular hydrophobicity that supports fungal growth, development and dispersal; whereas Class II form highly ordered films at water-air interfaces through intermolecular interactions but contribute nothing to the rodlet structure. RodD is a an hydrophobin-like protein that, unlike rodA, is not required for rodlet formation. The polypeptide is Hydrophobin-like protein rodD (Aspergillus fumigatus (strain ATCC MYA-4609 / CBS 101355 / FGSC A1100 / Af293) (Neosartorya fumigata)).